Consider the following 108-residue polypeptide: Immunoglobulin kappa variable 11-125 (108 aa).

Positions 1–23 (DVQMIQSPSSLSASLGDIVTMTC) are framework-1. A disulfide bridge links Cys23 with Cys88. The tract at residues 24-34 (QASQGTSINLN) is complementarity-determining-1. The interval 35-49 (WFQQKPGKAPKLLIY) is framework-2. Positions 50–56 (GASILED) are complementarity-determining-2. Residues 57–88 (GVPSRFSGSRYGTDFTLTISSLEDEDMATYFC) are framework-3. The complementarity-determining-3 stretch occupies residues 89 to 97 (LQHSYLPYT). The interval 98–108 (FGGGTKLEIKR) is framework-4.

The chain is Immunoglobulin kappa variable 11-125 from Mus musculus (Mouse).